The following is a 236-amino-acid chain: Purine nucleoside phosphorylase DeoD-type (236 aa).

His-5 serves as a coordination point for a purine D-ribonucleoside. Phosphate-binding positions include Gly-21, Arg-25, Arg-44, and 88–91 (RVGT). A purine D-ribonucleoside-binding positions include 180–182 (EME) and 204–205 (SD). The active-site Proton donor is the Asp-205.

It belongs to the PNP/UDP phosphorylase family. In terms of assembly, homohexamer; trimer of homodimers.

It carries out the reaction a purine D-ribonucleoside + phosphate = a purine nucleobase + alpha-D-ribose 1-phosphate. It catalyses the reaction a purine 2'-deoxy-D-ribonucleoside + phosphate = a purine nucleobase + 2-deoxy-alpha-D-ribose 1-phosphate. Functionally, catalyzes the reversible phosphorolytic breakdown of the N-glycosidic bond in the beta-(deoxy)ribonucleoside molecules, with the formation of the corresponding free purine bases and pentose-1-phosphate. The protein is Purine nucleoside phosphorylase DeoD-type of Shewanella baltica (strain OS155 / ATCC BAA-1091).